The following is an 880-amino-acid chain: Translation initiation factor IF-2 (880 aa).

Composition is skewed to basic and acidic residues over residues 180–194 and 202–228; these read QEAATKRKQDEEAAK and LAEEHSKRWAEEERQRLEAEKNGDHHI. A disordered region spans residues 180–289; the sequence is QEAATKRKQD…APESMAHGFN (110 aa). Basic residues predominate over residues 249–262; it reads GRRARNKSNAKKRG. The tr-type G domain maps to 380–549; sequence SRAPVVTIMG…LLQAEVLELK (170 aa). The G1 stretch occupies residues 389 to 396; the sequence is GHVDHGKT. 389-396 contributes to the GTP binding site; sequence GHVDHGKT. The G2 stretch occupies residues 414 to 418; it reads GITQH. The interval 435–438 is G3; the sequence is DTPG. Residues 435 to 439 and 489 to 492 each bind GTP; these read DTPGH and NKMD. Residues 489 to 492 form a G4 region; that stretch reads NKMD. Residues 525–527 are G5; it reads SAK.

The protein belongs to the TRAFAC class translation factor GTPase superfamily. Classic translation factor GTPase family. IF-2 subfamily.

The protein resides in the cytoplasm. In terms of biological role, one of the essential components for the initiation of protein synthesis. Protects formylmethionyl-tRNA from spontaneous hydrolysis and promotes its binding to the 30S ribosomal subunits. Also involved in the hydrolysis of GTP during the formation of the 70S ribosomal complex. The chain is Translation initiation factor IF-2 from Shewanella baltica (strain OS223).